The primary structure comprises 426 residues: Cytochrome c biogenesis protein Ccs1 (426 aa).

A run of 3 helical transmembrane segments spans residues 11–31 (LKFA…GSII), 70–90 (NFWF…CTFF), and 153–173 (IAPV…IFAS).

It belongs to the Ccs1/CcsB family. May interact with CcsA.

Its subcellular location is the plastid. The protein localises to the chloroplast thylakoid membrane. Functionally, required during biogenesis of c-type cytochromes (cytochrome c6 and cytochrome f) at the step of heme attachment. In Heterosigma akashiwo (strain CCMP452 / OLISTH), this protein is Cytochrome c biogenesis protein Ccs1.